The chain runs to 261 residues: Glutamate racemase (261 aa).

Substrate-binding positions include 7 to 8 and 39 to 40; these read DS and YG. Residue Cys71 is the Proton donor/acceptor of the active site. 72 to 73 contributes to the substrate binding site; that stretch reads NT. Catalysis depends on Cys184, which acts as the Proton donor/acceptor. A substrate-binding site is contributed by 185-186; sequence TH.

It belongs to the aspartate/glutamate racemases family.

It carries out the reaction L-glutamate = D-glutamate. Its pathway is cell wall biogenesis; peptidoglycan biosynthesis. Functionally, provides the (R)-glutamate required for cell wall biosynthesis. The polypeptide is Glutamate racemase (Aliarcobacter butzleri (strain RM4018) (Arcobacter butzleri)).